Consider the following 535-residue polypeptide: EH domain-containing protein 3 (535 aa).

The residue at position 1 (Met1) is an N-acetylmethionine. In terms of domain architecture, Dynamin-type G spans 55–286 (FDNKPMVLLV…DLFRDIQSLP (232 aa)). The segment at 65 to 72 (GQYSTGKT) is G1 motif. An ATP-binding site is contributed by 65 to 72 (GQYSTGKT). Positions 91–92 (EP) are G2 motif. The segment at 153–156 (DTPG) is G3 motif. The stretch at 198-227 (DEFSEVIKALKNHEDKMRVVLNKADQIETQ) forms a coiled coil. Residues 219-222 (NKAD) are G4 motif. Lys220 serves as a coordination point for ATP. Ile243 is a region of interest (G5 motif). Residue Trp258 participates in ATP binding. Lys315 participates in a covalent cross-link: Glycyl lysine isopeptide (Lys-Gly) (interchain with G-Cter in SUMO). Phosphoserine occurs at positions 349 and 456. Positions 444–532 (DKPMYDEIFY…AHLLPPSKRK (89 aa)) constitute an EH domain. One can recognise an EF-hand domain in the interval 476–511 (LPNSVLGKIWKLADIDKDGMLDDDEFALANHLIKVK). Positions 489, 491, 493, 495, and 500 each coordinate Ca(2+). A Glycyl lysine isopeptide (Lys-Gly) (interchain with G-Cter in SUMO) cross-link involves residue Lys511.

Belongs to the TRAFAC class dynamin-like GTPase superfamily. Dynamin/Fzo/YdjA family. EHD subfamily. In terms of assembly, homooligomer, and heterooligomer with EHD1, EHD2 and EHD4, ATP-binding is required for heterooligomerization. Interacts with PACSIN1. Interacts with PACSIN2. Interacts (via EH domain) with MICALL1. Interacts (via EH domain) with RAB11FIP2. Interacts with ANK2. In terms of tissue distribution, highly expressed in heart and brain and moderately expressed in kidney, liver, and placenta.

It localises to the recycling endosome membrane. Its subcellular location is the cell membrane. It is found in the cell projection. The protein resides in the cilium membrane. ATP- and membrane-binding protein that controls membrane reorganization/tubulation upon ATP hydrolysis. In vitro causes tubulation of endocytic membranes. Binding to phosphatidic acid induces its membrane tubulation activity. Plays a role in endocytic transport. Involved in early endosome to recycling endosome compartment (ERC), retrograde early endosome to Golgi, and endosome to plasma membrane (rapid recycling) protein transport. Involved in the regulation of Golgi maintenance and morphology. Involved in the recycling of internalized D1 dopamine receptor. Plays a role in cardiac protein trafficking probably implicating ANK2. Involved in the ventricular membrane targeting of SLC8A1 and CACNA1C and probably the atrial membrane localization of CACNA1GG and CACNA1H implicated in the regulation of atrial myocyte excitability and cardiac conduction. In conjunction with EHD4 may be involved in endocytic trafficking of KDR/VEGFR2 implicated in control of glomerular function. Involved in the rapid recycling of integrin beta-3 implicated in cell adhesion maintenance. Involved in the unidirectional retrograde dendritic transport of endocytosed BACE1 and in efficient sorting of BACE1 to axons implicating a function in neuronal APP processing. Plays a role in the formation of the ciliary vesicle, an early step in cilium biogenesis; possibly sharing redundant functions with EHD1. The polypeptide is EH domain-containing protein 3 (Homo sapiens (Human)).